The chain runs to 30 residues: Conopeptide Vi002 (30 aa).

Expressed by the venom gland.

It is found in the secreted. In Conus virgo (Virgin cone), this protein is Conopeptide Vi002.